A 272-amino-acid chain; its full sequence is Tryptophan synthase alpha chain (272 aa).

Active-site proton acceptor residues include E53 and D64.

It belongs to the TrpA family. In terms of assembly, tetramer of two alpha and two beta chains.

The catalysed reaction is (1S,2R)-1-C-(indol-3-yl)glycerol 3-phosphate + L-serine = D-glyceraldehyde 3-phosphate + L-tryptophan + H2O. It functions in the pathway amino-acid biosynthesis; L-tryptophan biosynthesis; L-tryptophan from chorismate: step 5/5. Functionally, the alpha subunit is responsible for the aldol cleavage of indoleglycerol phosphate to indole and glyceraldehyde 3-phosphate. The protein is Tryptophan synthase alpha chain of Xanthomonas campestris pv. campestris (strain B100).